The primary structure comprises 175 residues: Bifunctional protein PyrR (175 aa).

Positions 97-109 (IVLIDDVLFTGRT) match the PRPP-binding motif.

This sequence belongs to the purine/pyrimidine phosphoribosyltransferase family. PyrR subfamily. Homodimer and homohexamer; in equilibrium.

It carries out the reaction UMP + diphosphate = 5-phospho-alpha-D-ribose 1-diphosphate + uracil. Its function is as follows. Regulates transcriptional attenuation of the pyrimidine nucleotide (pyr) operon by binding in a uridine-dependent manner to specific sites on pyr mRNA. This disrupts an antiterminator hairpin in the RNA and favors formation of a downstream transcription terminator, leading to a reduced expression of downstream genes. Functionally, also displays a weak uracil phosphoribosyltransferase activity which is not physiologically significant. This chain is Bifunctional protein PyrR, found in Leuconostoc citreum (strain KM20).